A 315-amino-acid chain; its full sequence is Iron(3+)-hydroxamate-binding protein FhuD (315 aa).

Positions 1-23 (MTHIYKKLGAAFFALLLIAALAA) are cleaved as a signal peptide. C24 carries N-palmitoyl cysteine lipidation. The S-diacylglycerol cysteine moiety is linked to residue C24. The 256-residue stretch at 60–315 (RVVVMADGYY…LEFITESLTK (256 aa)) folds into the Fe/B12 periplasmic-binding domain.

It belongs to the bacterial solute-binding protein 8 family. As to quaternary structure, the complex is composed of an ATP-binding protein (FhuC), two transmembrane proteins (FhuB and FhuG) and a solute-binding protein (FhuD or YxeB).

The protein localises to the cell membrane. Its subcellular location is the membrane raft. Functionally, part of the ABC transporter complex FhuCBGD involved in iron(3+)-hydroxamate import. Binds the iron(3+)-hydroxamate complex and transfers it to the membrane-bound permease. Required for the transport of ferrichrome and coprogen. This chain is Iron(3+)-hydroxamate-binding protein FhuD (fhuD), found in Bacillus subtilis (strain 168).